The sequence spans 405 residues: L-rhamnonate dehydratase (405 aa).

Substrate-binding residues include H33 and R59. Positions 226, 252, and 280 each coordinate Mg(2+). H329 acts as the Proton acceptor in catalysis. E349 is a binding site for substrate.

Belongs to the mandelate racemase/muconate lactonizing enzyme family. RhamD subfamily. In terms of assembly, homooctamer; tetramer of dimers. Mg(2+) is required as a cofactor.

The catalysed reaction is L-rhamnonate = 2-dehydro-3-deoxy-L-rhamnonate + H2O. Its function is as follows. Catalyzes the dehydration of L-rhamnonate to 2-keto-3-deoxy-L-rhamnonate (KDR). This is L-rhamnonate dehydratase from Escherichia coli O127:H6 (strain E2348/69 / EPEC).